Here is a 141-residue protein sequence, read N- to C-terminus: Large ribosomal subunit protein uL13 (141 aa).

This sequence belongs to the universal ribosomal protein uL13 family. In terms of assembly, part of the 50S ribosomal subunit.

Functionally, this protein is one of the early assembly proteins of the 50S ribosomal subunit, although it is not seen to bind rRNA by itself. It is important during the early stages of 50S assembly. This Helicobacter pylori (strain P12) protein is Large ribosomal subunit protein uL13.